The chain runs to 846 residues: Translation initiation factor IF-2 (846 aa).

Residues 199–219 are disordered; sequence KREEEEKKSKAKKAGGKGFKK. The span at 207-219 shows a compositional bias: basic residues; it reads SKAKKAGGKGFKK. The tr-type G domain occupies 345 to 512; the sequence is SRAPVVTIMG…AVLLQSEVLE (168 aa). Residues 354–361 form a G1 region; it reads GHVDHGKT. 354 to 361 provides a ligand contact to GTP; the sequence is GHVDHGKT. The G2 stretch occupies residues 379–383; sequence GITQH. The segment at 400-403 is G3; it reads DTPG. GTP is bound by residues 400-404 and 454-457; these read DTPGH and NKID. Residues 454-457 are G4; it reads NKID. Residues 490–492 are G5; that stretch reads SAK.

The protein belongs to the TRAFAC class translation factor GTPase superfamily. Classic translation factor GTPase family. IF-2 subfamily.

The protein resides in the cytoplasm. Functionally, one of the essential components for the initiation of protein synthesis. Protects formylmethionyl-tRNA from spontaneous hydrolysis and promotes its binding to the 30S ribosomal subunits. Also involved in the hydrolysis of GTP during the formation of the 70S ribosomal complex. The chain is Translation initiation factor IF-2 from Francisella tularensis subsp. holarctica (strain LVS).